Consider the following 158-residue polypeptide: SsrA-binding protein (158 aa).

The interval 131 to 158 (YDKRQTLRERQDKREADRAMSSHRRLGE) is disordered.

The protein belongs to the SmpB family.

It is found in the cytoplasm. Required for rescue of stalled ribosomes mediated by trans-translation. Binds to transfer-messenger RNA (tmRNA), required for stable association of tmRNA with ribosomes. tmRNA and SmpB together mimic tRNA shape, replacing the anticodon stem-loop with SmpB. tmRNA is encoded by the ssrA gene; the 2 termini fold to resemble tRNA(Ala) and it encodes a 'tag peptide', a short internal open reading frame. During trans-translation Ala-aminoacylated tmRNA acts like a tRNA, entering the A-site of stalled ribosomes, displacing the stalled mRNA. The ribosome then switches to translate the ORF on the tmRNA; the nascent peptide is terminated with the 'tag peptide' encoded by the tmRNA and targeted for degradation. The ribosome is freed to recommence translation, which seems to be the essential function of trans-translation. This chain is SsrA-binding protein, found in Clavibacter michiganensis subsp. michiganensis (strain NCPPB 382).